The sequence spans 331 residues: Pectate lyase B (331 aa).

The first 25 residues, 1–25 (MKFTGSPLLWPSWLPLPAPPPPLPS), serve as a signal peptide directing secretion. N99 carries N-linked (GlcNAc...) asparagine glycosylation. 3 residues coordinate Ca(2+): D139, D169, and D173. Residue R226 is part of the active site.

The protein belongs to the polysaccharide lyase 1 family. Ca(2+) serves as cofactor.

It localises to the secreted. The enzyme catalyses Eliminative cleavage of (1-&gt;4)-alpha-D-galacturonan to give oligosaccharides with 4-deoxy-alpha-D-galact-4-enuronosyl groups at their non-reducing ends.. The protein operates within glycan metabolism; pectin degradation; 2-dehydro-3-deoxy-D-gluconate from pectin: step 2/5. Acts as a virulence factor active in plant tissue maceration. The polypeptide is Pectate lyase B (PLB) (Colletotrichum gloeosporioides (Anthracnose fungus)).